A 380-amino-acid polypeptide reads, in one-letter code: Alanine racemase (380 aa).

Catalysis depends on Lys-41, which acts as the Proton acceptor; specific for D-alanine. Residue Lys-41 is modified to N6-(pyridoxal phosphate)lysine. Arg-141 provides a ligand contact to substrate. Tyr-271 acts as the Proton acceptor; specific for L-alanine in catalysis. Met-318 is a binding site for substrate.

Belongs to the alanine racemase family. The cofactor is pyridoxal 5'-phosphate.

The enzyme catalyses L-alanine = D-alanine. Its pathway is amino-acid biosynthesis; D-alanine biosynthesis; D-alanine from L-alanine: step 1/1. Catalyzes the interconversion of L-alanine and D-alanine. May also act on other amino acids. This Latilactobacillus sakei subsp. sakei (strain 23K) (Lactobacillus sakei subsp. sakei) protein is Alanine racemase (alr).